The primary structure comprises 213 residues: Cytokinin riboside 5'-monophosphate phosphoribohydrolase LOG2 (213 aa).

Substrate contacts are provided by residues glutamate 79, 97–98 (RK), 114–120 (GYGTFEE), and threonine 126.

It belongs to the LOG family. In terms of tissue distribution, expressed in roots and shoots. Detected in root hairs.

It is found in the cytoplasm. The protein localises to the nucleus. It catalyses the reaction N(6)-(dimethylallyl)adenosine 5'-phosphate + H2O = N(6)-dimethylallyladenine + D-ribose 5-phosphate. The enzyme catalyses 9-ribosyl-trans-zeatin 5'-phosphate + H2O = trans-zeatin + D-ribose 5-phosphate. Functionally, cytokinin-activating enzyme working in the direct activation pathway. Phosphoribohydrolase that converts inactive cytokinin nucleotides to the biologically active free-base forms. The sequence is that of Cytokinin riboside 5'-monophosphate phosphoribohydrolase LOG2 (LOG2) from Arabidopsis thaliana (Mouse-ear cress).